The chain runs to 187 residues: Adenine phosphoribosyltransferase (187 aa).

This sequence belongs to the purine/pyrimidine phosphoribosyltransferase family. As to quaternary structure, homodimer.

It is found in the cytoplasm. It catalyses the reaction AMP + diphosphate = 5-phospho-alpha-D-ribose 1-diphosphate + adenine. It participates in purine metabolism; AMP biosynthesis via salvage pathway; AMP from adenine: step 1/1. Functionally, catalyzes a salvage reaction resulting in the formation of AMP, that is energically less costly than de novo synthesis. The chain is Adenine phosphoribosyltransferase from Yersinia pseudotuberculosis serotype O:3 (strain YPIII).